Here is a 109-residue protein sequence, read N- to C-terminus: Cell division protein ZapA (109 aa).

Positions 21 to 99 form a coiled coil; that stretch reads PEQLDALNQA…IEQALLEQGR (79 aa).

Belongs to the ZapA family. Type 1 subfamily. As to quaternary structure, homodimer. Interacts with FtsZ.

It localises to the cytoplasm. Functionally, activator of cell division through the inhibition of FtsZ GTPase activity, therefore promoting FtsZ assembly into bundles of protofilaments necessary for the formation of the division Z ring. It is recruited early at mid-cell but it is not essential for cell division. The chain is Cell division protein ZapA from Edwardsiella ictaluri (strain 93-146).